Here is a 382-residue protein sequence, read N- to C-terminus: U11/U12 small nuclear ribonucleoprotein 59 kDa protein (382 aa).

A coiled-coil region spans residues 31–63; the sequence is NTKNITDQLKQLQDTLNLAKSMEKELEALKMIK. The segment at 274–297 is disordered; that stretch reads SEENTTLTTSNKTNNDTDKDSNTN. Low complexity predominate over residues 277 to 287; it reads NTTLTTSNKTN.

As to quaternary structure, component of the U11/U12 snRNPs that are part of the U12-type spliceosome.

It is found in the nucleus. The polypeptide is U11/U12 small nuclear ribonucleoprotein 59 kDa protein (SNRNP59) (Arabidopsis thaliana (Mouse-ear cress)).